A 695-amino-acid chain; its full sequence is Phenoloxidase subunit 2 (695 aa).

3 residues coordinate Cu cation: His215, His219, and His245. Catalysis depends on Glu353, which acts as the Proton acceptor. Cu cation is bound by residues His368, His372, and His408. 2 disulfide bridges follow: Cys586-Cys630 and Cys588-Cys637.

Heterodimer. Forms a complex with an interleukin 1-like protein as a consequence of a host defense response. Cu(2+) serves as cofactor. In terms of processing, the N-terminus is blocked. Synthesized by oenocytoids, a type of hemocyte, and released into the hemolymph plasma.

It localises to the secreted. The enzyme catalyses 2 L-dopa + O2 = 2 L-dopaquinone + 2 H2O. It carries out the reaction L-tyrosine + O2 = L-dopaquinone + H2O. Activated by immulectin and lipopolysaccharide. Its function is as follows. This is a copper-containing oxidase that functions in the formation of pigments such as melanins and other polyphenolic compounds. Catalyzes the rate-limiting conversions of tyrosine to DOPA, DOPA to DOPA-quinone and possibly 5,6 dihydroxyindole to indole-5'6 quinone. Binds to the surface of hemocytes and is involved in hemocyte melanization. The protein is Phenoloxidase subunit 2 of Manduca sexta (Tobacco hawkmoth).